The primary structure comprises 428 residues: G2/mitotic-specific cyclin-1 (428 aa).

The interval 1–22 is disordered; sequence MKFSEEKNVSNNPTNFEGGLDS.

It belongs to the cyclin family. Cyclin AB subfamily. In terms of assembly, interacts with the CDC2 protein kinase to form a serine/threonine kinase holoenzyme complex also known as maturation promoting factor (MPF). The cyclin subunit imparts substrate specificity to the complex.

Essential for the control of the cell cycle at the G2/M (mitosis) transition. The polypeptide is G2/mitotic-specific cyclin-1 (Medicago sativa subsp. varia (Alfalfa)).